The primary structure comprises 67 residues: MKTKEMRDMTNAELDQRLAELKGELFNLRFQLATGQLENPLRIRNVRKDIARAKTIIRENELKQARA.

It belongs to the universal ribosomal protein uL29 family.

This chain is Large ribosomal subunit protein uL29, found in Alkaliphilus oremlandii (strain OhILAs) (Clostridium oremlandii (strain OhILAs)).